The following is a 520-amino-acid chain: GMP synthase [glutamine-hydrolyzing] (520 aa).

The Glutamine amidotransferase type-1 domain occupies 9 to 202; it reads TVLIVDFGSQ…VHKIAGIKGD (194 aa). The Nucleophile role is filled by Cys86. Active-site residues include His176 and Glu178. Positions 203–395 constitute a GMPS ATP-PPase domain; it reads WTMSAYRAKA…LGLPESFIGR (193 aa). 230 to 236 contacts ATP; it reads SGGVDSS.

In terms of assembly, homodimer.

It catalyses the reaction XMP + L-glutamine + ATP + H2O = GMP + L-glutamate + AMP + diphosphate + 2 H(+). It functions in the pathway purine metabolism; GMP biosynthesis; GMP from XMP (L-Gln route): step 1/1. Functionally, catalyzes the synthesis of GMP from XMP. This is GMP synthase [glutamine-hydrolyzing] from Sinorhizobium fredii (strain NBRC 101917 / NGR234).